A 142-amino-acid chain; its full sequence is Large ribosomal subunit protein uL11 (142 aa).

It belongs to the universal ribosomal protein uL11 family. As to quaternary structure, part of the ribosomal stalk of the 50S ribosomal subunit. Interacts with L10 and the large rRNA to form the base of the stalk. L10 forms an elongated spine to which L12 dimers bind in a sequential fashion forming a multimeric L10(L12)X complex. One or more lysine residues are methylated.

Functionally, forms part of the ribosomal stalk which helps the ribosome interact with GTP-bound translation factors. The polypeptide is Large ribosomal subunit protein uL11 (Mycobacterium leprae (strain Br4923)).